The primary structure comprises 90 residues: UPF0297 protein Cthe_0151 (90 aa).

It belongs to the UPF0297 family.

The protein is UPF0297 protein Cthe_0151 of Acetivibrio thermocellus (strain ATCC 27405 / DSM 1237 / JCM 9322 / NBRC 103400 / NCIMB 10682 / NRRL B-4536 / VPI 7372) (Clostridium thermocellum).